Reading from the N-terminus, the 198-residue chain is Probable nicotinate-nucleotide adenylyltransferase (198 aa).

It belongs to the NadD family.

The enzyme catalyses nicotinate beta-D-ribonucleotide + ATP + H(+) = deamido-NAD(+) + diphosphate. It functions in the pathway cofactor biosynthesis; NAD(+) biosynthesis; deamido-NAD(+) from nicotinate D-ribonucleotide: step 1/1. Functionally, catalyzes the reversible adenylation of nicotinate mononucleotide (NaMN) to nicotinic acid adenine dinucleotide (NaAD). This Chlorobium phaeobacteroides (strain BS1) protein is Probable nicotinate-nucleotide adenylyltransferase.